The chain runs to 210 residues: Cell division protein SepF (210 aa).

The tract at residues Gly-13 to Pro-101 is disordered. Basic and acidic residues-rich tracts occupy residues Glu-22–Glu-70 and Val-83–Pro-93.

This sequence belongs to the SepF family. In terms of assembly, homodimer. Interacts with FtsZ.

The protein localises to the cytoplasm. Its function is as follows. Cell division protein that is part of the divisome complex and is recruited early to the Z-ring. Probably stimulates Z-ring formation, perhaps through the cross-linking of FtsZ protofilaments. Its function overlaps with FtsA. The sequence is that of Cell division protein SepF from Micrococcus luteus (strain ATCC 4698 / DSM 20030 / JCM 1464 / CCM 169 / CCUG 5858 / IAM 1056 / NBRC 3333 / NCIMB 9278 / NCTC 2665 / VKM Ac-2230) (Micrococcus lysodeikticus).